A 626-amino-acid polypeptide reads, in one-letter code: Threonine--tRNA ligase (626 aa).

Positions 1-145 are editing domain; the sequence is MRMLLIHSDY…SRTIVPEKAV (145 aa). The interval 207 to 506 is catalytic; the sequence is PHVRLMLEQE…QEKGIKPMYP (300 aa). The Zn(2+) site is built by C299, H351, and H475.

Belongs to the class-II aminoacyl-tRNA synthetase family. In terms of assembly, homodimer. The cofactor is Zn(2+).

The protein localises to the cytoplasm. The enzyme catalyses tRNA(Thr) + L-threonine + ATP = L-threonyl-tRNA(Thr) + AMP + diphosphate + H(+). Catalyzes the attachment of threonine to tRNA(Thr) in a two-step reaction: L-threonine is first activated by ATP to form Thr-AMP and then transferred to the acceptor end of tRNA(Thr). Also edits incorrectly charged L-seryl-tRNA(Thr). This chain is Threonine--tRNA ligase, found in Thermococcus kodakarensis (strain ATCC BAA-918 / JCM 12380 / KOD1) (Pyrococcus kodakaraensis (strain KOD1)).